A 646-amino-acid chain; its full sequence is MMKFKLVSDYRPLGDQPKAIRSLVNGIKAGMREQTLLGVTGSGKTFTVANVIAEVQKPTLVISHNKTLAAQLYEEFREFFPENAVEYFVSYYDFYQPEAYIPQTDTYIDKEASINDEIDRMRHSATQSLLSRDDVIVVSSVSCIYGIGAPTDYGEFTLHLEVGSGPGREEVLEGLINMQYERNDVEFDRGQFRVRGDTVEINPIHGTPPIRIEFFGDEIDSISTVHRVTGRRIQKLDRVTIFPAKHFVIPEDRLQRAIESIEAELEERLTELRSQNKLLEAQRLEQRTRFDMEMLREMGYCQGIENYSMHLSGRKWGEKPNTLLDYFPEDFLTVIDESHVTVPQIRGMYNGDRARKDTLVEYGFRLPSARENRPLRFDEFQESVNQVIYVSATPGRYELSRSQNIVEQIIRPTGLVDPEVRIRPVKGQVDDLLSEIRRRVERGERVLVTTLTKRMAEDLTDYYSRVGVKVRYLHSEIDTLERVEIIDDLRRGEFDCLVGVNLLREGLDLPEVALVAILDADKEGFLRSETSLIQTIGRAARNVNGEVLIYAGRFTDSVMAAVETTNRRRKLQMEYNRRHGIKPRSTRRTLREEEGPLRNLKVDEIPDHELELIIKDLEAEMRDAARNLEFERAARIRDRIMSLKSN.

The Helicase ATP-binding domain maps to 25-412 (NGIKAGMREQ…QNIVEQIIRP (388 aa)). Residue 38-45 (GVTGSGKT) participates in ATP binding. A Beta-hairpin motif is present at residues 91-114 (YYDFYQPEAYIPQTDTYIDKEASI). Positions 428–594 (QVDDLLSEIR…STRRTLREEE (167 aa)) constitute a Helicase C-terminal domain. In terms of domain architecture, UVR spans 611 to 646 (ELIIKDLEAEMRDAARNLEFERAARIRDRIMSLKSN).

It belongs to the UvrB family. Forms a heterotetramer with UvrA during the search for lesions. Interacts with UvrC in an incision complex.

Its subcellular location is the cytoplasm. In terms of biological role, the UvrABC repair system catalyzes the recognition and processing of DNA lesions. A damage recognition complex composed of 2 UvrA and 2 UvrB subunits scans DNA for abnormalities. Upon binding of the UvrA(2)B(2) complex to a putative damaged site, the DNA wraps around one UvrB monomer. DNA wrap is dependent on ATP binding by UvrB and probably causes local melting of the DNA helix, facilitating insertion of UvrB beta-hairpin between the DNA strands. Then UvrB probes one DNA strand for the presence of a lesion. If a lesion is found the UvrA subunits dissociate and the UvrB-DNA preincision complex is formed. This complex is subsequently bound by UvrC and the second UvrB is released. If no lesion is found, the DNA wraps around the other UvrB subunit that will check the other stand for damage. This chain is UvrABC system protein B, found in Methanothermobacter thermautotrophicus (strain ATCC 29096 / DSM 1053 / JCM 10044 / NBRC 100330 / Delta H) (Methanobacterium thermoautotrophicum).